The sequence spans 401 residues: tRNA(Met) cytidine acetate ligase (401 aa).

Residues 7 to 20 (IVEY…HLYH), Gly-102, Asn-164, and Arg-189 contribute to the ATP site.

It belongs to the TmcAL family.

The protein resides in the cytoplasm. The catalysed reaction is cytidine(34) in elongator tRNA(Met) + acetate + ATP = N(4)-acetylcytidine(34) in elongator tRNA(Met) + AMP + diphosphate. Its function is as follows. Catalyzes the formation of N(4)-acetylcytidine (ac(4)C) at the wobble position of elongator tRNA(Met), using acetate and ATP as substrates. First activates an acetate ion to form acetyladenylate (Ac-AMP) and then transfers the acetyl group to tRNA to form ac(4)C34. This Thermoanaerobacter sp. (strain X514) protein is tRNA(Met) cytidine acetate ligase.